Consider the following 122-residue polypeptide: Urease subunit beta (122 aa).

The interval 102–122 is disordered; it reads DGGTAVAGEPRPGIAAERDHQ.

Belongs to the urease beta subunit family. As to quaternary structure, heterotrimer of UreA (gamma), UreB (beta) and UreC (alpha) subunits. Three heterotrimers associate to form the active enzyme.

Its subcellular location is the cytoplasm. It carries out the reaction urea + 2 H2O + H(+) = hydrogencarbonate + 2 NH4(+). The protein operates within nitrogen metabolism; urea degradation; CO(2) and NH(3) from urea (urease route): step 1/1. This chain is Urease subunit beta, found in Paenarthrobacter aurescens (strain TC1).